A 457-amino-acid polypeptide reads, in one-letter code: uncharacterized protein (457 aa).

Residues 5–63 (PVKKNDVIEVEIIDLTHEGLGVAKVDHYPLFIENALPGEKLEIKVLKTGKSFGYGKVLT) form the TRAM domain. Glutamine 287, tyrosine 316, glutamate 337, and aspartate 385 together coordinate S-adenosyl-L-methionine. The Nucleophile role is filled by cysteine 412.

This sequence belongs to the class I-like SAM-binding methyltransferase superfamily. RNA M5U methyltransferase family.

This is an uncharacterized protein from Enterococcus faecalis (strain ATCC 700802 / V583).